Here is a 1706-residue protein sequence, read N- to C-terminus: 5'-3' exoribonuclease 1 (1706 aa).

A Phosphoserine modification is found at Ser1348. The interval Glu1619 to Glu1706 is disordered. Residues Ala1623–Val1642 show a composition bias toward polar residues. Phosphoserine is present on Ser1645. Residues Arg1647–Ser1657 show a composition bias toward low complexity. Polar residues predominate over residues Pro1658 to Ser1676. Positions Ile1677–Lys1694 are enriched in basic residues.

This sequence belongs to the 5'-3' exonuclease family. As to quaternary structure, found in a mRNP complex with UPF1, UPF2, UPF3B and XRN1. Associates with alpha and beta tubulins. Interacts with DIS3L2. Interacts with ZC3HAV1 in an RNA-dependent manner. Interacts with ZFP36L1. Interacts with TRIM71 (via NHL repeats) in an RNA-dependent manner. Interacts with YTHDC2 (via ANK repeats). Interacts with DHX34; the interaction is RNA-independent. Expressed in heart, brain, pancreas, spleen, testis, osteogenic sarcoma (OGS) biopsy and primary cell lines.

The protein localises to the cytoplasm. Functionally, major 5'-3' exoribonuclease involved in mRNA decay. Required for the 5'-3'-processing of the G4 tetraplex-containing DNA and RNA substrates. The kinetic of hydrolysis is faster for G4 RNA tetraplex than for G4 DNA tetraplex and monomeric RNA tetraplex. Binds to RNA and DNA. Plays a role in replication-dependent histone mRNA degradation. May act as a tumor suppressor protein in osteogenic sarcoma (OGS). This chain is 5'-3' exoribonuclease 1, found in Homo sapiens (Human).